Here is a 231-residue protein sequence, read N- to C-terminus: Large ribosomal subunit protein uL1 (231 aa).

Belongs to the universal ribosomal protein uL1 family. Part of the 50S ribosomal subunit.

In terms of biological role, binds directly to 23S rRNA. The L1 stalk is quite mobile in the ribosome, and is involved in E site tRNA release. Its function is as follows. Protein L1 is also a translational repressor protein, it controls the translation of the L11 operon by binding to its mRNA. This Neisseria meningitidis serogroup A / serotype 4A (strain DSM 15465 / Z2491) protein is Large ribosomal subunit protein uL1.